The sequence spans 479 residues: Ubiquinone biosynthesis monooxygenase COQ6, mitochondrial (479 aa).

Belongs to the UbiH/COQ6 family. As to quaternary structure, component of a multi-subunit COQ enzyme complex, composed of at least COQ3, COQ4, COQ5, COQ6, COQ7 and COQ9. FAD serves as cofactor.

It is found in the mitochondrion inner membrane. The catalysed reaction is 4-hydroxy-3-(all-trans-decaprenyl)benzoate + 2 reduced [2Fe-2S]-[ferredoxin] + O2 + 2 H(+) = 3,4-dihydroxy-5-(all-trans-decaprenyl)benzoate + 2 oxidized [2Fe-2S]-[ferredoxin] + H2O. It catalyses the reaction 2-methoxy-6-(all-trans-decaprenyl)phenol + 2 reduced [2Fe-2S]-[ferredoxin] + O2 + 2 H(+) = 2-methoxy-6-(all-trans-decaprenyl)benzene-1,4-diol + 2 oxidized [2Fe-2S]-[ferredoxin] + H2O. It participates in cofactor biosynthesis; ubiquinone biosynthesis. FAD-dependent monooxygenase required for two non-consecutive steps during ubiquinone biosynthesis. Required for the C5-ring hydroxylation during ubiquinone biosynthesis by catalyzing the hydroxylation of 4-hydroxy-3-(all-trans-decaprenyl)benzoic acid to 3,4-dihydroxy-5-(all-trans-decaprenyl)benzoic acid. Also acts downstream of COQ4, for the C1-hydroxylation during ubiquinone biosynthesis by catalyzing the hydroxylation of 2-methoxy-6-(all-trans-decaprenyl)phenol to 2-methoxy-6-(all-trans-decaprenyl)benzene-1,4-diol. The electrons required for the hydroxylation reaction are funneled indirectly to coq6 from NADPH via a ferredoxin/ferredoxin reductase system. This chain is Ubiquinone biosynthesis monooxygenase COQ6, mitochondrial, found in Schizosaccharomyces pombe (strain 972 / ATCC 24843) (Fission yeast).